Consider the following 91-residue polypeptide: Bacterial microcompartment shell protein PduJ (91 aa).

Residues 4–88 (ALGLVETKGL…PHSDVEAILP (85 aa)) form the BMC domain.

This sequence belongs to the bacterial microcompartments protein family. As to quaternary structure, homohexamer with a central pore of about 5.7 Angstroms in diameter. Interacts with PduP, which targets PduP to the BMC.

It localises to the bacterial microcompartment. Its pathway is polyol metabolism; 1,2-propanediol degradation. Functionally, one of the major shell proteins of the bacterial microcompartment (BMC) dedicated to 1,2-propanediol (1,2-PD) degradation. The isolated BMC shell component protein ratio for J:A:B':B:K:T:U is approximately 15:10:7:6:1:1:2. At least one of PduA or PduJ is required for BMC assembly; it must be encoded as the first gene in the pdu operon. Required for structural integrity of BMCs and to mitigate propionaldehyde toxicity, probably joins facets responsible for BMC closure. Edge residues (particularly Lys-25) are important for function and assembly of the BMC. 80% identical to PduA; although their pore regions appear structurally identical, unlike PduA plays no role in 1,2-PD diffusion into or out of the BMC shell. If pduJ is cloned in the chromosomal position of pduA it is able to complement a pduA deletion; it then has a functional pore as it assumes the transport functions of PduA. Overexpression of this protein leads to aberrant filaments that extend the length of the cell, cross the cleavage furrow and impair division. The filaments form nanotubes with a hollow center. Modeling suggests PduJ is probably the hub for binding multiple enzymes to the interior of the BMC; modeling suggests PduC, PduD, PduG and PduM are targeted to PduJ. Its function is as follows. The 1,2-propanediol (1,2-PD) degradation bacterial microcompartment (BMC) concentrates low levels of 1,2-PD catabolic enzymes, concentrates volatile reaction intermediates thus enhancing pathway flux and keeps the level of toxic, mutagenic propionaldehyde low. In Salmonella typhimurium (strain LT2 / SGSC1412 / ATCC 700720), this protein is Bacterial microcompartment shell protein PduJ.